The following is a 348-amino-acid chain: UPF0324 membrane protein BH02290 (348 aa).

The next 11 membrane-spanning stretches (helical) occupy residues 13–35, 45–67, 74–96, 106–128, 135–157, 167–189, 196–218, 223–245, 257–275, 285–307, and 319–341; these read AFLN…AYGL, QAWL…CFTL, GITF…SISV, LLAS…GRLF, AMLV…APVI, SIAF…HPFL, YGVL…ASVS, QIAT…ALSI, LHTL…MLIR, LIPI…GLGV, and VILA…IQLN.

Belongs to the UPF0324 family.

The protein localises to the cell membrane. This Bartonella henselae (strain ATCC 49882 / DSM 28221 / CCUG 30454 / Houston 1) (Rochalimaea henselae) protein is UPF0324 membrane protein BH02290.